Reading from the N-terminus, the 293-residue chain is Shikimate dehydrogenase (NADP(+)) (293 aa).

Shikimate contacts are provided by residues 20–22 and T72; that span reads SLT. Catalysis depends on K76, which acts as the Proton acceptor. Residues N97 and D112 each contribute to the shikimate site. Residues 136 to 140 and I230 contribute to the NADP(+) site; that span reads GAGGA. Residue Y232 participates in shikimate binding. G253 contacts NADP(+).

It belongs to the shikimate dehydrogenase family. As to quaternary structure, homodimer.

The enzyme catalyses shikimate + NADP(+) = 3-dehydroshikimate + NADPH + H(+). Its pathway is metabolic intermediate biosynthesis; chorismate biosynthesis; chorismate from D-erythrose 4-phosphate and phosphoenolpyruvate: step 4/7. Functionally, involved in the biosynthesis of the chorismate, which leads to the biosynthesis of aromatic amino acids. Catalyzes the reversible NADPH linked reduction of 3-dehydroshikimate (DHSA) to yield shikimate (SA). The polypeptide is Shikimate dehydrogenase (NADP(+)) (Pseudarthrobacter chlorophenolicus (strain ATCC 700700 / DSM 12829 / CIP 107037 / JCM 12360 / KCTC 9906 / NCIMB 13794 / A6) (Arthrobacter chlorophenolicus)).